The following is a 73-amino-acid chain: Copper chaperone ATX1 (73 aa).

Residues 4–68 (IKHYQFNVVM…KIKKTGKEVR (65 aa)) form the HMA domain. Cys15 and Cys18 together coordinate Cu(+).

Belongs to the ATX1 family. In terms of assembly, homodimer. Interacts with CCC2 via the copper anion.

It localises to the cytoplasm. Its activity is regulated as follows. Tetrathiomolybdate directly and reversibly down-regulates copper delivery to secreted metalloenzymes. Copper homeostasis factor that specifically transports copper to the secretory pathway for incorporation into copper enzymes destined for the cell surface or extracellular milieu. Shuttles copper to the transport ATPase CCC2 on a post-Golgi vesicle for eventual targeting to the cell-surface high-affinity iron uptake protein FET3. Protects against oxygen toxicity. The sequence is that of Copper chaperone ATX1 from Saccharomyces cerevisiae (strain ATCC 204508 / S288c) (Baker's yeast).